The chain runs to 379 residues: Putative cysteine desulfurase IscS 1 (379 aa).

Residues 71–72, asparagine 151, glutamine 179, and 199–201 contribute to the pyridoxal 5'-phosphate site; these read GT and SGH. N6-(pyridoxal phosphate)lysine is present on lysine 202. Threonine 237 serves as a coordination point for pyridoxal 5'-phosphate. Residue cysteine 325 is the Cysteine persulfide intermediate of the active site. Cysteine 325 lines the [2Fe-2S] cluster pocket.

Belongs to the class-V pyridoxal-phosphate-dependent aminotransferase family. NifS/IscS subfamily. It depends on pyridoxal 5'-phosphate as a cofactor.

It carries out the reaction (sulfur carrier)-H + L-cysteine = (sulfur carrier)-SH + L-alanine. Its function is as follows. Catalyzes the removal of elemental sulfur from cysteine to produce alanine. The sequence is that of Putative cysteine desulfurase IscS 1 (iscS1) from Bacillus subtilis (strain 168).